The sequence spans 457 residues: MSTHTETPVDGSAETITGAQPYEAGFTESSAGRVYTVTGGDWEQVLGVGEDDGERITVNMGPQHPSTHGVLRLVLEIEGETVTETRLVIGYLHTGIEKSCEYRTWTQAVTFLTRADYLSPLYNEAAYCLSVEKLLGITGEVPERATVIRVLVMELQRIASHLVWLATGGMELGATTGMIFGFREREKILDLLETITGLRMNHAYIRPGGLAQDIPDEVIPEIRAFLDYMPKRIREYHALLTGQPIWKARMVDVNFLDAAACLALGTTGPVLRAAGLPWDLRKTMPYCGYETYEFDVPTALEGDSYARYLVRIEEMGESLKIIEQCLDRLRPGPVMVADKKIAWPSQLAIGSDGMGNSLEYIRKIMGTSMEALIHHFKLVTEGFRVPAGQVYTQIESPRGELGYHVVSDGGTRPFRVHVRDPSFVNLQAVPALTEGGQVADVIVGVASVDPVLGGVDR.

Residues 1–23 (MSTHTETPVDGSAETITGAQPYE) are disordered.

The protein belongs to the complex I 49 kDa subunit family. In terms of assembly, NDH-1 is composed of 14 different subunits. Subunits NuoB, C, D, E, F, and G constitute the peripheral sector of the complex.

It is found in the cell membrane. It catalyses the reaction a quinone + NADH + 5 H(+)(in) = a quinol + NAD(+) + 4 H(+)(out). Functionally, NDH-1 shuttles electrons from NADH, via FMN and iron-sulfur (Fe-S) centers, to quinones in the respiratory chain. The immediate electron acceptor for the enzyme in this species is believed to be a menaquinone. Couples the redox reaction to proton translocation (for every two electrons transferred, four hydrogen ions are translocated across the cytoplasmic membrane), and thus conserves the redox energy in a proton gradient. The sequence is that of NADH-quinone oxidoreductase subunit D from Parafrankia sp. (strain EAN1pec).